The primary structure comprises 1496 residues: MTDTNELFEDQTTALQNSAPIAPLANPQHTVSRGKFRSLTLINWNGFFARTFDLDELVTTLSGGNGAGKSTTMAGFVTALIPDLTLLNFRNTTEAGSTSSSRDKGLYGKLKAGVCYAVLESLNSRGQRVITGVRLQQVAGRDKKVDIRSFSLQNVPMSDSIISVLTEQVGEKARVLPLADLKDKFDGSEVVFKQYHSITDYHSFMFDLGVIPKRLRSSADRSKFYKLIEASLYGGISSVITKSLRDYLLPENTGVRQAFQDMESALRENRMTLEAIKVTQSDRDMFKRLITESTNYVSADYMRNANERRGNVQIALEQRRAWYESKSKLELEQQRLIEFSREVADISENESSLEAEYNSANDHLNLVMNALRHQEKIERYQDEVAELNEKLEEQQIALEEVSEQVETAQARADDADDQVEELRSQMADYQQALDAQQTRALQYQQAIAALEKAKQLCGLPHLDLHNVEDYHAEFAAQADDLTDQVFELEQRLSVSDMAKTQFEKAYELVCKISGEIDRSEAWDEARSLLTAFTDQKMQATQAVALRQKLADLEQRLHQQQNAERLLAEFNQKAQTQFETAEELEGYFEQQQARLEDVEAELAEFVEVRSTQRQQREQLNQQYNQLAKTAPAWHTAQSALARLEEQCGEKFEASQSVMQFMQNMLTKEREATLARDKLARREAALDAQITRLSQPDGSDDVRLNQLAERFGGVLLSELYDDVSIDDAPYFSALYGEARHAIVVRDLESVKSQLEKLDDCPTDLYLIEGDPSAFDDAVFTAEELAEGVVVKVSDRQWRYSKFPEVPLFGRAAREKHLETLKAERDEVSEQHAERAFDVQKCQRLHQHLSQFVGTHLSLAFQPNPEEQMQEIAAERTEIERELNQAAGNEQQLRSQLDSAKAKLQMLNKILPLVSLLEDETLADRAEECRAQLDEAEEDEQFVRQFGNYLTQLEPIAASLKSDPAKFEQLEQDYRQAKAEQKQVQQKVFALSDVIQRRVHFSYEEAIGSEGSALTEQLRTRLENAQREREQARDQLRQAQAQFTQYNQVLTGLRSSCDAKTQMLQELIREIDDLGVRGDIGAEERARSRRDELQQRLSQQRSRKGYLDKQLGTIEAEIDNLTRTLRKAERDYHTQRELVVQAKVSWCLVLKLSRNSDVEKRLNRRELAYQSAEELRSISDKALGALRTAVADNEYLRDSLRASEDSRKPENKVAFFIAVYQHLRERIRQDIIKTDDPIDAIEQMEIELSRLTNELTSREKKLAISAESVANILRKTIQREQNRILQLNQGLQNIAFGQVKGVRLVVNIRDTHAILLNALSNGREEHKDLFDSQKLSFSEALAMLYKRVNPHIEMGQRTPQTIGEELLDYRNYLDLEVETFRGADGWMRAESSALSTGEAIGTGMSILLMVVQSWEEESRRMRAKDILPSRLLFLDEAARLDATSINTLFELCERLDMQLLIAAPENISPERGTTYKLVRKITNNQEYVHVVGLKGFGQQ.

Position 63–70 (63–70) interacts with ATP; that stretch reads GGNGAGKS. Coiled-coil stretches lie at residues 328-493 and 536-632; these read KLEL…QRLS and KMQA…APAW. Residues 694–811 form a flexible hinge region; that stretch reads PDGSDDVRLN…EVPLFGRAAR (118 aa). Coiled-coil stretches lie at residues 861–1171 and 1235–1291; these read NPEE…SAEE and IDAI…LQNI. The span at 1082 to 1091 shows a compositional bias: basic and acidic residues; it reads RARSRRDELQ. A disordered region spans residues 1082 to 1101; sequence RARSRRDELQQRLSQQRSRK.

The protein belongs to the SMC family. MukB subfamily. As to quaternary structure, homodimerization via its hinge domain. Binds to DNA via its C-terminal region. Interacts, and probably forms a ternary complex, with MukE and MukF via its C-terminal region. The complex formation is stimulated by calcium or magnesium. Interacts with tubulin-related protein FtsZ.

It localises to the cytoplasm. It is found in the nucleoid. Plays a central role in chromosome condensation, segregation and cell cycle progression. Functions as a homodimer, which is essential for chromosome partition. Involved in negative DNA supercoiling in vivo, and by this means organize and compact chromosomes. May achieve or facilitate chromosome segregation by condensation DNA from both sides of a centrally located replisome during cell division. The protein is Chromosome partition protein MukB of Actinobacillus pleuropneumoniae serotype 3 (strain JL03).